We begin with the raw amino-acid sequence, 327 residues long: tRNA dimethylallyltransferase (327 aa).

14-21 (GPTASGKT) provides a ligand contact to ATP. Residue 16-21 (TASGKT) participates in substrate binding. Interaction with substrate tRNA regions lie at residues 39 to 42 (DSAL) and 163 to 167 (QRIQR).

The protein belongs to the IPP transferase family. In terms of assembly, monomer. Requires Mg(2+) as cofactor.

The catalysed reaction is adenosine(37) in tRNA + dimethylallyl diphosphate = N(6)-dimethylallyladenosine(37) in tRNA + diphosphate. Its function is as follows. Catalyzes the transfer of a dimethylallyl group onto the adenine at position 37 in tRNAs that read codons beginning with uridine, leading to the formation of N6-(dimethylallyl)adenosine (i(6)A). This chain is tRNA dimethylallyltransferase, found in Xanthomonas oryzae pv. oryzae (strain KACC10331 / KXO85).